Here is a 427-residue protein sequence, read N- to C-terminus: Serine--tRNA ligase (427 aa).

Position 232–234 (Thr232–Glu234) interacts with L-serine. Position 263–265 (Arg263–Glu265) interacts with ATP. L-serine is bound at residue Glu286. ATP is bound at residue Glu350–Ser353. Ser385 contributes to the L-serine binding site.

It belongs to the class-II aminoacyl-tRNA synthetase family. Type-1 seryl-tRNA synthetase subfamily. As to quaternary structure, homodimer. The tRNA molecule binds across the dimer.

The protein resides in the cytoplasm. The catalysed reaction is tRNA(Ser) + L-serine + ATP = L-seryl-tRNA(Ser) + AMP + diphosphate + H(+). The enzyme catalyses tRNA(Sec) + L-serine + ATP = L-seryl-tRNA(Sec) + AMP + diphosphate + H(+). Its pathway is aminoacyl-tRNA biosynthesis; selenocysteinyl-tRNA(Sec) biosynthesis; L-seryl-tRNA(Sec) from L-serine and tRNA(Sec): step 1/1. Catalyzes the attachment of serine to tRNA(Ser). Is also able to aminoacylate tRNA(Sec) with serine, to form the misacylated tRNA L-seryl-tRNA(Sec), which will be further converted into selenocysteinyl-tRNA(Sec). The polypeptide is Serine--tRNA ligase (Lacticaseibacillus casei (strain BL23) (Lactobacillus casei)).